The sequence spans 139 residues: Protein spalt-accessory (139 aa).

The signal sequence occupies residues methionine 1–alanine 16. Residues glycine 60–glycine 75 show a composition bias toward gly residues. The tract at residues glycine 60–histidine 139 is disordered. Basic and acidic residues predominate over residues asparagine 109 to histidine 121. Residues arginine 122–histidine 139 are compositionally biased toward basic residues.

Its subcellular location is the secreted. In terms of biological role, likely to be involved in the establishment of the head. This is Protein spalt-accessory (sala) from Drosophila simulans (Fruit fly).